We begin with the raw amino-acid sequence, 518 residues long: Cytochrome P450 CYP72A219 (518 aa).

Residues E2 to W22 form a helical membrane-spanning segment. C465 contributes to the heme binding site.

The protein belongs to the cytochrome P450 family. Requires heme as cofactor.

It localises to the membrane. Its function is as follows. Probable heme-thiolate monooxygenase. In Panax ginseng (Korean ginseng), this protein is Cytochrome P450 CYP72A219.